The following is a 778-amino-acid chain: Double zinc ribbon and ankyrin repeat-containing protein 1 (778 aa).

Serine 179 and serine 201 each carry phosphoserine. DZANK-type zinc fingers lie at residues 230–289 (CAHC…CVVC) and 359–407 (CSRC…GSCG). ANK repeat units lie at residues 631-662 (ENKL…DPNC) and 666-695 (QGRP…DIDQ). Residue serine 768 is modified to Phosphoserine.

As to quaternary structure, interacts with NINL. Associates with DYNC1H1 and multiple dynein intermediate and light chains as well as actin-binding proteins.

Its subcellular location is the cytoplasm. It localises to the cytoskeleton. The protein resides in the microtubule organizing center. The protein localises to the centrosome. It is found in the cilium basal body. Involved in vesicle transport in photoreceptor cells. This Mus musculus (Mouse) protein is Double zinc ribbon and ankyrin repeat-containing protein 1 (Dzank1).